Here is a 178-residue protein sequence, read N- to C-terminus: Protein PilI (178 aa).

A CheW-like domain is found at 34–173; that stretch reads SWSGIGFRMG…PHALAQHQGF (140 aa).

In terms of biological role, may be a part of a signal-transduction system that regulates twitching motility by controlling pilus function (extension and retraction). This Pseudomonas aeruginosa (strain ATCC 15692 / DSM 22644 / CIP 104116 / JCM 14847 / LMG 12228 / 1C / PRS 101 / PAO1) protein is Protein PilI (pilI).